The sequence spans 186 residues: Ribosome-recycling factor (186 aa).

The protein belongs to the RRF family.

It localises to the cytoplasm. Responsible for the release of ribosomes from messenger RNA at the termination of protein biosynthesis. May increase the efficiency of translation by recycling ribosomes from one round of translation to another. In Cupriavidus metallidurans (strain ATCC 43123 / DSM 2839 / NBRC 102507 / CH34) (Ralstonia metallidurans), this protein is Ribosome-recycling factor.